The chain runs to 233 residues: Homeobox protein Hox-D4a (233 aa).

The Antp-type hexapeptide signature appears at 124–129 (VYPWMK). The homeobox DNA-binding region spans 145–204 (PKRSRTAYTRQQVLELEKEFHFNRYLTRRRRIEIAHTLCLSERQIKIWFQNRRMKWTKDH). The interval 203–233 (DHKLPNTKGRSAPASSHLQSIHKDQTDITSL) is disordered. The span at 223-233 (IHKDQTDITSL) shows a compositional bias: basic and acidic residues.

The protein belongs to the Antp homeobox family. Deformed subfamily.

Its subcellular location is the nucleus. In terms of biological role, sequence-specific transcription factor which is part of a developmental regulatory system that provides cells with specific positional identities on the anterior-posterior axis. In Takifugu rubripes (Japanese pufferfish), this protein is Homeobox protein Hox-D4a (hoxd4a).